We begin with the raw amino-acid sequence, 876 residues long: Envelope glycoprotein gp160 (876 aa).

An N-terminal signal peptide occupies residues 1–33 (MTVTMKVMKKNNRKSWSLYIAMALLIPCLSYSK). At 34 to 697 (QLYATVYSGV…ITKWLWYIKI (664 aa)) the chain is on the extracellular side. Residues Cys-55 and Cys-75 are joined by a disulfide bond. N-linked (GlcNAc...) asparagine; by host glycans are attached at residues Asn-60, Asn-89, Asn-138, Asn-144, Asn-152, Asn-156, Asn-181, Asn-187, Asn-197, Asn-229, Asn-234, Asn-241, Asn-262, Asn-276, Asn-293, Asn-323, Asn-337, Asn-357, and Asn-361. Cystine bridges form between Cys-120-Cys-205, Cys-127-Cys-196, Cys-132-Cys-153, Cys-218-Cys-247, and Cys-228-Cys-239. Positions 132 to 152 (CVDLQTNKTGLLNETINEMRN) are V1. Residues 153-196 (CSFNVTTVLTDKKEQKQALFYVSDLSKVNDSNAVNGTTYMLTNC) are V2. The V3 stretch occupies residues 296-333 (CIREGIAEVQDIYTGPMRWRSMTLKRSNNTSPRSRVAY). An intrachain disulfide couples Cys-296 to Cys-334. Residues 369–379 (TSGGDAEVSHL) form a CD4-binding loop region. Disulfide bonds link Cys-383/Cys-452 and Cys-390/Cys-425. The V4 stretch occupies residues 390 to 425 (CNTSGMFNYTFINCTKSGCQEIKGSNETNKNGTIPC). Asn-391, Asn-397, Asn-402, Asn-415, Asn-420, Asn-449, Asn-455, and Asn-468 each carry an N-linked (GlcNAc...) asparagine; by host glycan. 2 V5 regions span residues 468 to 478 (NSTGENTLRPV) and 470 to 478 (TGENTLRPV). The interval 524–544 (AVGLGMLFLGVLSAAGSTMGA) is fusion peptide. Positions 586-604 (RQLRARLQALETLIQNQQR) are immunosuppression. Cys-610 and Cys-616 are disulfide-bonded. N-linked (GlcNAc...) asparagine; by host glycans are attached at residues Asn-623, Asn-638, and Asn-650. Residues 646–680 (QHINNVSSIIYDEIQAAQDQQEKNVKALLELDEWA) are a coiled coil. The MPER; binding to GalCer stretch occupies residues 675 to 696 (ELDEWASLWNWFDITKWLWYIK). A helical membrane pass occupies residues 698-718 (AIIIVGALIGIRVIMIILNLV). Residues 719–876 (KNIRQGYQPL…IRQGAERILV (158 aa)) lie on the Cytoplasmic side of the membrane. Positions 725–728 (YQPL) match the YXXL motif; contains endocytosis signal motif.

The protein belongs to the HIV-1 env protein family. As to quaternary structure, the mature envelope protein (Env) consists of a homotrimer of non-covalently associated gp120-gp41 heterodimers. The resulting complex protrudes from the virus surface as a spike. There seems to be as few as 10 spikes on the average virion. Interacts with host CD4, CCR5 and CXCR4. Gp120 also interacts with the C-type lectins CD209/DC-SIGN and CLEC4M/DC-SIGNR (collectively referred to as DC-SIGN(R)). Gp120 and gp41 interact with GalCer. Gp120 interacts with host ITGA4/ITGB7 complex; on CD4+ T-cells, this interaction results in rapid activation of integrin ITGAL/LFA-1, which facilitates efficient cell-to-cell spreading of HIV-1. Gp120 interacts with cell-associated heparan sulfate; this interaction increases virus infectivity on permissive cells and may be involved in infection of CD4- cells. The mature envelope protein (Env) consists of a homotrimer of non-covalently associated gp120-gp41 heterodimers. The resulting complex protrudes from the virus surface as a spike. There seems to be as few as 10 spikes on the average virion. Post-translationally, highly glycosylated by host. The high number of glycan on the protein is reffered to as 'glycan shield' because it contributes to hide protein sequence from adaptive immune system. In terms of processing, palmitoylation of the transmembrane protein and of Env polyprotein (prior to its proteolytic cleavage) is essential for their association with host cell membrane lipid rafts. Palmitoylation is therefore required for envelope trafficking to classical lipid rafts, but not for viral replication. Specific enzymatic cleavages in vivo yield mature proteins. Envelope glycoproteins are synthesized as an inactive precursor that is heavily N-glycosylated and processed likely by host cell furin in the Golgi to yield the mature SU and TM proteins. The cleavage site between SU and TM requires the minimal sequence [KR]-X-[KR]-R. About 2 of the 9 disulfide bonds of gp41 are reduced by P4HB/PDI, following binding to CD4 receptor.

Its subcellular location is the virion membrane. It localises to the host cell membrane. The protein localises to the host endosome membrane. In terms of biological role, oligomerizes in the host endoplasmic reticulum into predominantly trimers. In a second time, gp160 transits in the host Golgi, where glycosylation is completed. The precursor is then proteolytically cleaved in the trans-Golgi and thereby activated by cellular furin or furin-like proteases to produce gp120 and gp41. Attaches the virus to the host lymphoid cell by binding to the primary receptor CD4. This interaction induces a structural rearrangement creating a high affinity binding site for a chemokine coreceptor like CXCR4 and/or CCR5. Acts as a ligand for CD209/DC-SIGN and CLEC4M/DC-SIGNR, which are respectively found on dendritic cells (DCs), and on endothelial cells of liver sinusoids and lymph node sinuses. These interactions allow capture of viral particles at mucosal surfaces by these cells and subsequent transmission to permissive cells. HIV subverts the migration properties of dendritic cells to gain access to CD4+ T-cells in lymph nodes. Virus transmission to permissive T-cells occurs either in trans (without DCs infection, through viral capture and transmission), or in cis (following DCs productive infection, through the usual CD4-gp120 interaction), thereby inducing a robust infection. In trans infection, bound virions remain infectious over days and it is proposed that they are not degraded, but protected in non-lysosomal acidic organelles within the DCs close to the cell membrane thus contributing to the viral infectious potential during DCs' migration from the periphery to the lymphoid tissues. On arrival at lymphoid tissues, intact virions recycle back to DCs' cell surface allowing virus transmission to CD4+ T-cells. Its function is as follows. Acts as a class I viral fusion protein. Under the current model, the protein has at least 3 conformational states: pre-fusion native state, pre-hairpin intermediate state, and post-fusion hairpin state. During fusion of viral and target intracellular membranes, the coiled coil regions (heptad repeats) assume a trimer-of-hairpins structure, positioning the fusion peptide in close proximity to the C-terminal region of the ectodomain. The formation of this structure appears to drive apposition and subsequent fusion of viral and target cell membranes. Complete fusion occurs in host cell endosomes and is dynamin-dependent, however some lipid transfer might occur at the plasma membrane. The virus undergoes clathrin-dependent internalization long before endosomal fusion, thus minimizing the surface exposure of conserved viral epitopes during fusion and reducing the efficacy of inhibitors targeting these epitopes. Membranes fusion leads to delivery of the nucleocapsid into the cytoplasm. The polypeptide is Envelope glycoprotein gp160 (Homo sapiens (Human)).